The sequence spans 502 residues: Cytochrome P450 83A1 (502 aa).

The chain crosses the membrane as a helical span at residues 1-21 (MEDIIIGVVALAAVLLFFLYQ). C442 contacts heme.

It belongs to the cytochrome P450 family. Requires heme as cofactor.

It is found in the endoplasmic reticulum membrane. The enzyme catalyses an (E)-omega-(methylsulfanyl)-alkanal oxime + glutathione + reduced [NADPH--hemoprotein reductase] + O2 = an S-[(1E)-1-(hydroxyimino)-omega-(methylsulfanyl)alkyl]-L-glutathione + oxidized [NADPH--hemoprotein reductase] + 2 H2O + H(+). Its function is as follows. Involved in the metabolism of aliphatic and aromatic oximes. Involved in the biosynthesis of both short-chain and long-chain aliphatic glucosinolates. The protein is Cytochrome P450 83A1 (CYP83A1) of Arabidopsis thaliana (Mouse-ear cress).